Consider the following 404-residue polypeptide: Probable tRNA sulfurtransferase (404 aa).

Residues 60 to 165 enclose the THUMP domain; that stretch reads TAVAESLKQV…EEAAYLSYET (106 aa). ATP is bound by residues 183 to 184, 208 to 209, Arg-265, Gly-287, and Gln-296; these read ML and HF.

Belongs to the ThiI family.

The protein resides in the cytoplasm. It carries out the reaction [ThiI sulfur-carrier protein]-S-sulfanyl-L-cysteine + a uridine in tRNA + 2 reduced [2Fe-2S]-[ferredoxin] + ATP + H(+) = [ThiI sulfur-carrier protein]-L-cysteine + a 4-thiouridine in tRNA + 2 oxidized [2Fe-2S]-[ferredoxin] + AMP + diphosphate. It catalyses the reaction [ThiS sulfur-carrier protein]-C-terminal Gly-Gly-AMP + S-sulfanyl-L-cysteinyl-[cysteine desulfurase] + AH2 = [ThiS sulfur-carrier protein]-C-terminal-Gly-aminoethanethioate + L-cysteinyl-[cysteine desulfurase] + A + AMP + 2 H(+). Its pathway is cofactor biosynthesis; thiamine diphosphate biosynthesis. Its function is as follows. Catalyzes the ATP-dependent transfer of a sulfur to tRNA to produce 4-thiouridine in position 8 of tRNAs, which functions as a near-UV photosensor. Also catalyzes the transfer of sulfur to the sulfur carrier protein ThiS, forming ThiS-thiocarboxylate. This is a step in the synthesis of thiazole, in the thiamine biosynthesis pathway. The sulfur is donated as persulfide by IscS. The protein is Probable tRNA sulfurtransferase of Streptococcus pneumoniae serotype 2 (strain D39 / NCTC 7466).